Reading from the N-terminus, the 480-residue chain is Cysteine--tRNA ligase (480 aa).

C27 is a Zn(2+) binding site. The short motif at 29–39 (PTVYNYAHIGN) is the 'HIGH' region element. 3 residues coordinate Zn(2+): C221, H246, and E250. Residues 278-282 (KMSKS) carry the 'KMSKS' region motif. K281 lines the ATP pocket.

The protein belongs to the class-I aminoacyl-tRNA synthetase family. In terms of assembly, monomer. Requires Zn(2+) as cofactor.

It localises to the cytoplasm. It carries out the reaction tRNA(Cys) + L-cysteine + ATP = L-cysteinyl-tRNA(Cys) + AMP + diphosphate. The protein is Cysteine--tRNA ligase of Borrelia garinii subsp. bavariensis (strain ATCC BAA-2496 / DSM 23469 / PBi) (Borreliella bavariensis).